A 592-amino-acid polypeptide reads, in one-letter code: Proteasome-associated ATPase (592 aa).

A compositionally biased stretch (acidic residues) spans 1 to 11 (MTGYDSSEEAE). The segment at 1–24 (MTGYDSSEEAERDSSPADGYRQTP) is disordered. A coiled-coil region spans residues 25 to 99 (AQLSAQIRVL…LKEEVDRLAQ (75 aa)). 281–286 (GCGKTL) lines the ATP pocket. A docks into pockets in the proteasome alpha-ring region spans residues 591–592 (YL).

The protein belongs to the AAA ATPase family. Homohexamer. Assembles into a hexameric ring structure that caps the 20S proteasome core. Strongly interacts with the prokaryotic ubiquitin-like protein Pup through a hydrophobic interface; the interacting region of ARC lies in its N-terminal coiled-coil domain. There is one Pup binding site per ARC hexamer ring. Upon ATP-binding, the C-terminus of ARC interacts with the alpha-rings of the proteasome core, possibly by binding to the intersubunit pockets.

It functions in the pathway protein degradation; proteasomal Pup-dependent pathway. Functionally, ATPase which is responsible for recognizing, binding, unfolding and translocation of pupylated proteins into the bacterial 20S proteasome core particle. May be essential for opening the gate of the 20S proteasome via an interaction with its C-terminus, thereby allowing substrate entry and access to the site of proteolysis. Thus, the C-termini of the proteasomal ATPase may function like a 'key in a lock' to induce gate opening and therefore regulate proteolysis. This is Proteasome-associated ATPase from Nakamurella multipartita (strain ATCC 700099 / DSM 44233 / CIP 104796 / JCM 9543 / NBRC 105858 / Y-104) (Microsphaera multipartita).